A 112-amino-acid chain; its full sequence is Large ribosomal subunit protein bL17 (112 aa).

Belongs to the bacterial ribosomal protein bL17 family. In terms of assembly, part of the 50S ribosomal subunit. Contacts protein L32.

The polypeptide is Large ribosomal subunit protein bL17 (Desulforudis audaxviator (strain MP104C)).